The primary structure comprises 232 residues: 5'-methylthioadenosine/S-adenosylhomocysteine nucleosidase (232 aa).

Catalysis depends on E14, which acts as the Proton acceptor. Substrate is bound by residues G80, V154, and 175–176; that span reads ME. The Proton donor role is filled by D199.

It belongs to the PNP/UDP phosphorylase family. MtnN subfamily.

It carries out the reaction S-adenosyl-L-homocysteine + H2O = S-(5-deoxy-D-ribos-5-yl)-L-homocysteine + adenine. The catalysed reaction is S-methyl-5'-thioadenosine + H2O = 5-(methylsulfanyl)-D-ribose + adenine. It catalyses the reaction 5'-deoxyadenosine + H2O = 5-deoxy-D-ribose + adenine. The protein operates within amino-acid biosynthesis; L-methionine biosynthesis via salvage pathway; S-methyl-5-thio-alpha-D-ribose 1-phosphate from S-methyl-5'-thioadenosine (hydrolase route): step 1/2. Catalyzes the irreversible cleavage of the glycosidic bond in both 5'-methylthioadenosine (MTA) and S-adenosylhomocysteine (SAH/AdoHcy) to adenine and the corresponding thioribose, 5'-methylthioribose and S-ribosylhomocysteine, respectively. Also cleaves 5'-deoxyadenosine, a toxic by-product of radical S-adenosylmethionine (SAM) enzymes, into 5-deoxyribose and adenine. This Actinobacillus pleuropneumoniae serotype 5b (strain L20) protein is 5'-methylthioadenosine/S-adenosylhomocysteine nucleosidase.